We begin with the raw amino-acid sequence, 137 residues long: MSAVLVLALVLLSLTCVTDAISDACLTCICKQESYGCTQIGCRMDGRSLSCGYFQIKKSYWIDCGRLGSSWEACADDYNCAVRCVRAYMKKYIGKSGCTANCKNYARLHNGGPKGCTKPSTLTYWNAVKNQGCSINS.

The signal sequence occupies residues 1–20 (MSAVLVLALVLLSLTCVTDA). One can recognise an I-type lysozyme domain in the interval 21-134 (ISDACLTCIC…WNAVKNQGCS (114 aa)). Cystine bridges form between Cys-25–Cys-102, Cys-30–Cys-37, Cys-42–Cys-51, Cys-64–Cys-84, Cys-74–Cys-80, and Cys-98–Cys-116. Glu-33 (proton donor) is an active-site residue. Asp-45 (nucleophile) is an active-site residue. 57-63 (KKSYWID) is a substrate binding site. Substrate-binding positions include Tyr-88 and 109-111 (HNG).

This sequence belongs to the glycosyl hydrolase 22 family. Type-I lysozyme subfamily.

Its subcellular location is the secreted. It catalyses the reaction Hydrolysis of (1-&gt;4)-beta-linkages between N-acetylmuramic acid and N-acetyl-D-glucosamine residues in a peptidoglycan and between N-acetyl-D-glucosamine residues in chitodextrins.. Functionally, has bacteriolytic activity. May play a role in digestion and in the host defense mechanisms against invading microbes. In Ostrea edulis (Native oyster), this protein is Lysozyme (lysoz).